The primary structure comprises 224 residues: MSKKALCIISGGMDSTLCAYLAKKEGYEIIALHFDYEQRTQEKEKECFKQICKALKVEKSYILDVSFIKDIGGNALTDKSIDIPKNELCTSDTPPITYVPFRNGIFLSIAGSLAEKENCESIFIGVVEEDGSGYPDCTDEFIQKAQEFINEGTSKNFKVCIKTPLVRLNKAKIVELALKENVPLELTWSCYESEDEACGECDSCLLRLRGFEKAGFKDKIKYKS.

An ATP-binding site is contributed by 9-19 (ISGGMDSTLCA). Residues Cys190, Cys198, Cys201, and Cys204 each contribute to the Zn(2+) site.

It belongs to the QueC family. Requires Zn(2+) as cofactor.

It carries out the reaction 7-carboxy-7-deazaguanine + NH4(+) + ATP = 7-cyano-7-deazaguanine + ADP + phosphate + H2O + H(+). Its pathway is purine metabolism; 7-cyano-7-deazaguanine biosynthesis. In terms of biological role, catalyzes the ATP-dependent conversion of 7-carboxy-7-deazaguanine (CDG) to 7-cyano-7-deazaguanine (preQ(0)). This Campylobacter jejuni (strain RM1221) protein is 7-cyano-7-deazaguanine synthase.